We begin with the raw amino-acid sequence, 953 residues long: MTSATSPIILKWDPKSLEIRTLTVERLLEPLVTQVTTLVNTSNKGPSGKKKGRSKKAHVLAASVEQATQNFLEKGEQIAKESQDLKEELVAAVEDVRKQGETMRIASSEFADDPCSSVKRGTMVRAARALLSAVTRLLILADMADVMRLLSHLKIVEEALEAVKNATNEQDLANRFKEFGKEMVKLNYVAARRQQELKDPHCRDEMAAARGALKKNATMLYTASQAFLRHPDVAATRANRDYVFKQVQEAIAGISSAAQATSPTDEAKGHTGIGELAAALNEFDNKIILDPMTFSEARFRPSLEERLESIISGAALMADSSCTRDDRRERIVAECNAVRQALQDLLSEYMNNTGRKEKGDPLNIAIDKMTKKTRDLRRQLRKAVMDHISDSFLETNVPLLVLIEAAKSGNEKEVKEYAQVFREHANKLVEVANLACSISNNEEGVKLVRMAATQIDSLCPQVINAALTLAARPQSKVAQDNMDVFKDQWEKQVRVLTEAVDDITSVDDFLSVSENHILEDVNKCVIALQEGDVDTLDRTAGAIRGRAARVIHIINAEMENYEAGVYTEKVLEATKLLSETVMPRFAEQVEVAIEALSANVPQPFEENEFIDASRLVYDGVRDIRKAVLMIRTPEELEDDSDFEQEDYDVRSRTSVQTEDDQLIAGQSARAIMAQLPQEEKAKIAEQVEIFHQEKSKLDAEVAKWDDSGNDIIVLAKQMCMIMMEMTDFTRGKGPLKNTSDVINAAKKIAEAGSRMDKLARAVADQCPDSACKQDLLAYLQRIALYCHQLNICSKVKAEVQNLGGELIVSGTGVQSTFTTFYEVDCDVIDGGRASQLSTHLPTCAEGAPIGSGSSDSSMLDSATSLIQAAKNLMNAVVLTVKASYVASTKYQKVYGTAAVNSPVVSWKMKAPEKKPLVKREKPEEFQTRVRRGSQKKHISPVQALSEFKAMDSF.

Residue T632 is modified to Phosphothreonine. Phosphoserine is present on residues S640, S651, and S901. The span at 912–927 (EKKPLVKREKPEEFQT) shows a compositional bias: basic and acidic residues. The segment at 912-939 (EKKPLVKREKPEEFQTRVRRGSQKKHIS) is disordered. Residues 928-938 (RVRRGSQKKHI) show a composition bias toward basic residues. Position 939 is a phosphoserine (S939).

The protein belongs to the vinculin/alpha-catenin family. In terms of assembly, interacts with CDH1 and CDH2. Interacts with ZNF639; recruits CTNNA2 to the nucleus. Interacts with F-actin. Expressed almost exclusively in the nervous system.

It is found in the cell membrane. Its subcellular location is the cytoplasm. The protein localises to the cytoskeleton. The protein resides in the cell junction. It localises to the adherens junction. It is found in the cell projection. Its subcellular location is the axon. The protein localises to the nucleus. Functionally, may function as a linker between cadherin adhesion receptors and the cytoskeleton to regulate cell-cell adhesion and differentiation in the nervous system. Required for proper regulation of cortical neuronal migration and neurite growth. It acts as a negative regulator of Arp2/3 complex activity and Arp2/3-mediated actin polymerization. It thereby suppresses excessive actin branching which would impair neurite growth and stability. Regulates morphological plasticity of synapses and cerebellar and hippocampal lamination during development. Functions in the control of startle modulation. The chain is Catenin alpha-2 (Ctnna2) from Mus musculus (Mouse).